The sequence spans 482 residues: tRNA sulfurtransferase (482 aa).

Residues 61–165 (AQYLETLACI…NDELYIISAV (105 aa)) form the THUMP domain. Residues 183–184 (LL), lysine 265, glycine 287, and glutamine 296 each bind ATP. An intrachain disulfide couples cysteine 344 to cysteine 456. One can recognise a Rhodanese domain in the interval 404 to 482 (LAADEVILDI…GFDNVKVYRP (79 aa)). Cysteine 456 functions as the Cysteine persulfide intermediate in the catalytic mechanism.

It belongs to the ThiI family.

The protein localises to the cytoplasm. The catalysed reaction is [ThiI sulfur-carrier protein]-S-sulfanyl-L-cysteine + a uridine in tRNA + 2 reduced [2Fe-2S]-[ferredoxin] + ATP + H(+) = [ThiI sulfur-carrier protein]-L-cysteine + a 4-thiouridine in tRNA + 2 oxidized [2Fe-2S]-[ferredoxin] + AMP + diphosphate. It carries out the reaction [ThiS sulfur-carrier protein]-C-terminal Gly-Gly-AMP + S-sulfanyl-L-cysteinyl-[cysteine desulfurase] + AH2 = [ThiS sulfur-carrier protein]-C-terminal-Gly-aminoethanethioate + L-cysteinyl-[cysteine desulfurase] + A + AMP + 2 H(+). It participates in cofactor biosynthesis; thiamine diphosphate biosynthesis. Its function is as follows. Catalyzes the ATP-dependent transfer of a sulfur to tRNA to produce 4-thiouridine in position 8 of tRNAs, which functions as a near-UV photosensor. Also catalyzes the transfer of sulfur to the sulfur carrier protein ThiS, forming ThiS-thiocarboxylate. This is a step in the synthesis of thiazole, in the thiamine biosynthesis pathway. The sulfur is donated as persulfide by IscS. This chain is tRNA sulfurtransferase, found in Aeromonas salmonicida (strain A449).